The chain runs to 135 residues: RxLR effector protein Avh5 (135 aa).

The N-terminal stretch at 1 to 19 (MRLQFFLVMAVATLATISA) is a signal peptide. The RxLR-dEER motif lies at 43 to 71 (RFLRTADTDIVYEPKVHNPGKKQVFIEDK). A 1,2-diacyl-sn-glycero-3-phospho-(1D-myo-inositol-3-phosphate) contacts are provided by Lys-81, Lys-83, and Lys-84.

Belongs to the RxLR effector family.

The protein resides in the secreted. It is found in the host cell. In terms of biological role, effector that suppresses plant defense responses during the early stages of pathogen infection. Suppresses cell death induced by effectors and PAMPs in plant hosts. The chain is RxLR effector protein Avh5 from Phytophthora sojae (Soybean stem and root rot agent).